Here is a 239-residue protein sequence, read N- to C-terminus: 7-cyano-7-deazaguanine synthase (239 aa).

Position 13 to 23 (13 to 23 (LSGGLDSMVTA)) interacts with ATP. Zn(2+) contacts are provided by Cys-193, Cys-203, Cys-206, and Cys-209.

It belongs to the QueC family. Requires Zn(2+) as cofactor.

It carries out the reaction 7-carboxy-7-deazaguanine + NH4(+) + ATP = 7-cyano-7-deazaguanine + ADP + phosphate + H2O + H(+). Its pathway is purine metabolism; 7-cyano-7-deazaguanine biosynthesis. Its function is as follows. Catalyzes the ATP-dependent conversion of 7-carboxy-7-deazaguanine (CDG) to 7-cyano-7-deazaguanine (preQ(0)). In Erythrobacter litoralis (strain HTCC2594), this protein is 7-cyano-7-deazaguanine synthase.